A 295-amino-acid chain; its full sequence is Protoheme IX farnesyltransferase (295 aa).

Transmembrane regions (helical) follow at residues 7–27 (VTKPGIIFGNLISVIGGFLLA), 34–54 (VPLFILTMAGVSLVVASGCVF), 78–98 (LIAPGVSLWYASALGVAGIAL), 106–126 (LAALLAVLGFIVYVGVYSLYM), 131–151 (VYGTLVGSLSGAAPPVIGYCA), 161–181 (LILLAIFSLWQMPHSYAIAIF), 207–227 (ITLYILAFMVPTLMLFLGGYA), 228–248 (GYKYLIVATAVSVWWLGMALS), and 263–283 (LFMFSIVTITCLSVMMSVDFQ).

Belongs to the UbiA prenyltransferase family. Protoheme IX farnesyltransferase subfamily.

It is found in the cell inner membrane. The catalysed reaction is heme b + (2E,6E)-farnesyl diphosphate + H2O = Fe(II)-heme o + diphosphate. Its pathway is porphyrin-containing compound metabolism; heme O biosynthesis; heme O from protoheme: step 1/1. Its function is as follows. Converts heme B (protoheme IX) to heme O by substitution of the vinyl group on carbon 2 of heme B porphyrin ring with a hydroxyethyl farnesyl side group. This chain is Protoheme IX farnesyltransferase, found in Aeromonas salmonicida (strain A449).